We begin with the raw amino-acid sequence, 83 residues long: Short neurotoxin 3FTx-Oxy3 (83 aa).

The signal sequence occupies residues 1 to 21 (MKTLLLTLVVVTIVCLDLGYT). 4 disulfide bridges follow: Cys-24–Cys-45, Cys-38–Cys-62, Cys-64–Cys-75, and Cys-76–Cys-81.

Belongs to the three-finger toxin family. Short-chain subfamily. Type I alpha-neurotoxin sub-subfamily. Expressed by the venom gland.

Its subcellular location is the secreted. Its function is as follows. Binds to muscle nicotinic acetylcholine receptor (nAChR) and inhibit acetylcholine from binding to the receptor, thereby impairing neuromuscular transmission. This is Short neurotoxin 3FTx-Oxy3 from Oxyuranus microlepidotus (Inland taipan).